A 326-amino-acid chain; its full sequence is Putative ABC transporter ATP-binding protein MPN_334 (326 aa).

The ABC transporter domain maps to 7–239 (VEVKHLEKEF…NFGYRLKVNN (233 aa)). 42-49 (GQNGAGKT) provides a ligand contact to ATP.

It belongs to the ABC transporter superfamily.

This chain is Putative ABC transporter ATP-binding protein MPN_334, found in Mycoplasma pneumoniae (strain ATCC 29342 / M129 / Subtype 1) (Mycoplasmoides pneumoniae).